Here is a 381-residue protein sequence, read N- to C-terminus: Creatine kinase M-type (381 aa).

The Phosphagen kinase N-terminal domain maps to Lys-11 to Gly-98. A Phosphagen kinase C-terminal domain is found at Tyr-125 to Leu-367. Residue Ser-128–Arg-132 coordinates ATP. Ser-164 carries the post-translational modification Phosphoserine. Thr-166 carries the phosphothreonine modification. Ser-178 is subject to Phosphoserine. Position 180 is a phosphothreonine (Thr-180). ATP is bound at residue His-191. The residue at position 199 (Ser-199) is a Phosphoserine. Residues Arg-236 and Arg-292 each contribute to the ATP site. Phosphothreonine occurs at positions 313 and 322. Residues Arg-320–Val-325 and Asp-335 contribute to the ATP site. Ser-372 carries the phosphoserine modification.

Belongs to the ATP:guanido phosphotransferase family. In terms of assembly, dimer of identical or non-identical chains, which can be either B (brain type) or M (muscle type). With MM being the major form in skeletal muscle and myocardium, MB existing in myocardium, and BB existing in many tissues, especially brain.

Its subcellular location is the cytoplasm. The enzyme catalyses creatine + ATP = N-phosphocreatine + ADP + H(+). Its function is as follows. Reversibly catalyzes the transfer of phosphate between ATP and various phosphogens (e.g. creatine phosphate). Creatine kinase isoenzymes play a central role in energy transduction in tissues with large, fluctuating energy demands, such as skeletal muscle, heart, brain and spermatozoa. The chain is Creatine kinase M-type (Ckm) from Mus musculus (Mouse).